A 425-amino-acid chain; its full sequence is Protein CLP1 homolog (425 aa).

ATP-binding positions include glutamate 18, lysine 59, and 121–126; that span reads DVGKST.

This sequence belongs to the Clp1 family. Clp1 subfamily.

Its subcellular location is the nucleus. Its function is as follows. Required for endonucleolytic cleavage during polyadenylation-dependent pre-mRNA 3'-end formation. This is Protein CLP1 homolog (cbc) from Drosophila ananassae (Fruit fly).